The following is a 173-amino-acid chain: uncharacterized protein (173 aa).

Belongs to the ycf73 family.

It localises to the plastid. The protein localises to the chloroplast. This is an uncharacterized protein from Saccharum hybrid (Sugarcane).